Here is a 290-residue protein sequence, read N- to C-terminus: Ribosomal RNA small subunit methyltransferase A (290 aa).

Residues asparagine 27, leucine 29, glycine 54, glutamate 75, aspartate 100, and asparagine 125 each coordinate S-adenosyl-L-methionine.

The protein belongs to the class I-like SAM-binding methyltransferase superfamily. rRNA adenine N(6)-methyltransferase family. RsmA subfamily.

The protein resides in the cytoplasm. The catalysed reaction is adenosine(1518)/adenosine(1519) in 16S rRNA + 4 S-adenosyl-L-methionine = N(6)-dimethyladenosine(1518)/N(6)-dimethyladenosine(1519) in 16S rRNA + 4 S-adenosyl-L-homocysteine + 4 H(+). Specifically dimethylates two adjacent adenosines (A1518 and A1519) in the loop of a conserved hairpin near the 3'-end of 16S rRNA in the 30S particle. May play a critical role in biogenesis of 30S subunits. The chain is Ribosomal RNA small subunit methyltransferase A from Streptococcus pneumoniae (strain 70585).